The sequence spans 517 residues: Glycerol kinase (517 aa).

Threonine 24 serves as a coordination point for ADP. Residues threonine 24, threonine 25, and serine 26 each coordinate ATP. Threonine 24 provides a ligand contact to sn-glycerol 3-phosphate. Arginine 28 serves as a coordination point for ADP. Sn-glycerol 3-phosphate contacts are provided by arginine 94, glutamate 95, tyrosine 146, and aspartate 261. The glycerol site is built by arginine 94, glutamate 95, tyrosine 146, aspartate 261, and glutamine 262. Positions 283 and 327 each coordinate ADP. Threonine 283, glycine 327, glutamine 331, and glycine 428 together coordinate ATP. ADP-binding residues include glycine 428 and asparagine 432.

It belongs to the FGGY kinase family.

The catalysed reaction is glycerol + ATP = sn-glycerol 3-phosphate + ADP + H(+). It participates in polyol metabolism; glycerol degradation via glycerol kinase pathway; sn-glycerol 3-phosphate from glycerol: step 1/1. Inhibited by fructose 1,6-bisphosphate (FBP). Key enzyme in the regulation of glycerol uptake and metabolism. Catalyzes the phosphorylation of glycerol to yield sn-glycerol 3-phosphate. This Mycobacterium tuberculosis (strain ATCC 25177 / H37Ra) protein is Glycerol kinase.